The chain runs to 84 residues: Cytochrome b559 subunit alpha (84 aa).

A helical transmembrane segment spans residues 22 to 36 (IIHIPAITILFASGF). Position 24 (H24) interacts with heme.

The protein belongs to the PsbE/PsbF family. As to quaternary structure, heterodimer of an alpha subunit and a beta subunit. PSII is composed of 1 copy each of membrane proteins PsbA, PsbB, PsbC, PsbD, PsbE, PsbF, PsbH, PsbI, PsbJ, PsbK, PsbL, PsbM, PsbT, PsbX, Psb30/Ycf12, peripheral proteins PsbO, CyanoQ (PsbQ), PsbU, PsbV and a large number of cofactors. It forms dimeric complexes. The cofactor is heme b.

It localises to the cell inner membrane. This b-type cytochrome is tightly associated with the reaction center of photosystem II (PSII). PSII is a light-driven water:plastoquinone oxidoreductase that uses light energy to abstract electrons from H(2)O, generating O(2) and a proton gradient subsequently used for ATP formation. It consists of a core antenna complex that captures photons, and an electron transfer chain that converts photonic excitation into a charge separation. The protein is Cytochrome b559 subunit alpha of Gloeobacter violaceus (strain ATCC 29082 / PCC 7421).